We begin with the raw amino-acid sequence, 494 residues long: Amidophosphoribosyltransferase (494 aa).

The propeptide occupies 1 to 10 (MFNYSGLNEE). C11 functions as the Nucleophile in the catalytic mechanism. Residues 11–231 (CGVFGIWNHP…AGEYVVINDK (221 aa)) enclose the Glutamine amidotransferase type-2 domain. The Mg(2+) site is built by S294, D356, and D357.

This sequence in the C-terminal section; belongs to the purine/pyrimidine phosphoribosyltransferase family. It depends on Mg(2+) as a cofactor.

The catalysed reaction is 5-phospho-beta-D-ribosylamine + L-glutamate + diphosphate = 5-phospho-alpha-D-ribose 1-diphosphate + L-glutamine + H2O. The protein operates within purine metabolism; IMP biosynthesis via de novo pathway; N(1)-(5-phospho-D-ribosyl)glycinamide from 5-phospho-alpha-D-ribose 1-diphosphate: step 1/2. In terms of biological role, catalyzes the formation of phosphoribosylamine from phosphoribosylpyrophosphate (PRPP) and glutamine. The protein is Amidophosphoribosyltransferase of Staphylococcus aureus (strain MRSA252).